Consider the following 126-residue polypeptide: Glycerol dehydrogenase small subunit (126 aa).

4 helical membrane-spanning segments follow: residues 13-33 (WLTL…VIGG), 41-61 (GSTY…FMLM), 67-87 (AFLY…EVGF), and 92-112 (LLPR…TIPV).

It is found in the cell membrane. The enzyme catalyses glycerol + A = dihydroxyacetone + AH2. Functionally, catalyzes the oxidation of glycerol to glycerone. Also acts, more slowly, on a number of other polyols including D-sorbitol, D-arabinitol, D-mannitol, meso-erythritol, adonitol and propylene glycol. This is Glycerol dehydrogenase small subunit (sldB) from Gluconobacter thailandicus.